Here is a 576-residue protein sequence, read N- to C-terminus: TRAF-type zinc finger domain-containing protein 1 (576 aa).

A2 bears the N-acetylalanine mark. The TRAF-type zinc-finger motif lies at 27-103 (IHEIHCQRNI…DLELSVVKLK (77 aa)). A phosphoserine mark is found at S278, S320, S326, S327, S409, S415, S430, and S450. A disordered region spans residues 402–432 (EGIPTQDSQPEDRSPELSRRRVKHQGDLSSG). Positions 411–420 (PEDRSPELSR) are enriched in basic and acidic residues. Disordered regions lie at residues 465-491 (LNSSGPRSDCQRSPPGVLKLNNSGSQD) and 529-576 (HGSP…EEEE). At S531 the chain carries Phosphoserine. A compositionally biased stretch (polar residues) spans 540–552 (GSRSSRVTPTAAS).

As to quaternary structure, interacts with MAVS, TICAM1, TRAF1, TRAF2, TRAF3 and TRAF6. In terms of tissue distribution, expressed in vascular smooth muscle cells.

Functionally, negative feedback regulator that controls excessive innate immune responses. Regulates both Toll-like receptor 4 (TLR4) and DDX58/RIG1-like helicases (RLH) pathways. May inhibit the LTR pathway by direct interaction with TRAF6 and attenuation of NF-kappa-B activation. May negatively regulate the RLH pathway downstream from MAVS and upstream of NF-kappa-B and IRF3. The sequence is that of TRAF-type zinc finger domain-containing protein 1 (Trafd1) from Rattus norvegicus (Rat).